The chain runs to 256 residues: MKTLVLLSICALLSVCWSMGAVEPEVVVDTVADTTADAAPADPAAAAAPSSSSSESSESSESSESSESSESSESSESSESNSSSASDSNSSSDSSASDSNSSSDSSSSSSSSSSSSSSSSSSSESTESSESSESSSSSSSSSSSSSSSSSSSSSESSSSESNSADSSASDSPSSSSSSSSSSSSESASDEAAKVVVKRDLASVLLRRRRAAPGGDLTPLQLESLREVCELNIACDEMAETAGIVAAYVAYYGPVPF.

The first 18 residues, 1-18 (MKTLVLLSICALLSVCWS), serve as a signal peptide directing secretion. Residues 19-209 (MGAVEPEVVV…LASVLLRRRR (191 aa)) constitute a propeptide that is removed on maturation. Over residues 38–186 (AAPADPAAAA…SSSSSSSSES (149 aa)) the composition is skewed to low complexity. Positions 38-193 (AAPADPAAAA…SESASDEAAK (156 aa)) are disordered. The Gla domain occupies 218–252 (PLQLESLREVCELNIACDEMAETAGIVAAYVAYYG). 4 residues coordinate Ca(2+): Glu222, Glu226, Glu229, and Asp235. Residues Glu222, Glu226, and Glu229 each carry the 4-carboxyglutamate modification. An intrachain disulfide couples Cys228 to Cys234. Glu236 bears the 4-carboxyglutamate mark.

The protein belongs to the osteocalcin/matrix Gla protein family. Post-translationally, gamma-carboxyglutamate residues are formed by vitamin K dependent carboxylation by GGCX. These residues are essential for the binding of calcium.

Its subcellular location is the secreted. Functionally, the carboxylated form is one of the main organic components of the bone matrix, which constitutes 1-2% of the total bone protein. The carboxylated form binds strongly to apatite and calcium. The sequence is that of Osteocalcin 2 from Diplodus sargus (White seabream).